The chain runs to 559 residues: MSMLKDPSSKYRAFPVINLPDRTWPSKTIDAAPIWCSSDLRDGNQSLIEPMDAVKKLRFWKTLVQVGVKEIEASFPAASQTDFDFVRTLIEDGHIPDDTTIQVLTQGREDLIERTFESLRGAKKAIVHLYNATSPSFRRIVFNQDKDGIKAIAVNAAKLFVKYAAMQPDTEWTFEYSPETFSATELEFAKEVCDAVIEVWNPTPEHKIILNLPATVECATPNVYADQIEWFHRNINRRDSVIISLHTHNDRGTGVAATELGLMAGADRVEGCLFGNGERTGNVDLVTVALNMYTQGINPDLDFSDIDGVRKVVEECNQIQVHPRHPYVGDLVHTAFSGSHQDAIRKGFAQQKPDTLWEVPYLPIDPADIGRSYEAVIRVNSQSGKGGIAYLLEQEYGISLPRRMQIEFSQVVQRETDRLGLEMTAQQIHALLHSEYLQANTPYALVSHRLQEENGNSAVEVEVASKGQGETNLHWRGKGNGALEALVAGLPIPVEIMDYNEHAIGAGTNAKAAAYIELRVNGERAVHGVGIDENITTASFKALFSALNRSLSQPEAKAA.

One can recognise a Pyruvate carboxyltransferase domain in the interval 33–307; that stretch reads PIWCSSDLRD…NPDLDFSDID (275 aa). Residues D42, H246, H248, and N282 each contribute to the Mg(2+) site. A regulatory domain region spans residues 439-559; sequence ANTPYALVSH…SLSQPEAKAA (121 aa).

It belongs to the alpha-IPM synthase/homocitrate synthase family. LeuA type 2 subfamily. In terms of assembly, homodimer. Requires Mg(2+) as cofactor.

It localises to the cytoplasm. The enzyme catalyses 3-methyl-2-oxobutanoate + acetyl-CoA + H2O = (2S)-2-isopropylmalate + CoA + H(+). The protein operates within amino-acid biosynthesis; L-leucine biosynthesis; L-leucine from 3-methyl-2-oxobutanoate: step 1/4. Catalyzes the condensation of the acetyl group of acetyl-CoA with 3-methyl-2-oxobutanoate (2-ketoisovalerate) to form 3-carboxy-3-hydroxy-4-methylpentanoate (2-isopropylmalate). In Pseudomonas fluorescens (strain Pf0-1), this protein is 2-isopropylmalate synthase.